The sequence spans 290 residues: Ribonuclease HIII (290 aa).

Positions 78–290 constitute an RNase H type-2 domain; sequence LPLIGTDEVG…FKNTEKAKNA (213 aa). A divalent metal cation-binding residues include Asp-84, Glu-85, and Asp-187.

The protein belongs to the RNase HII family. RnhC subfamily. It depends on Mn(2+) as a cofactor. The cofactor is Mg(2+).

It is found in the cytoplasm. It catalyses the reaction Endonucleolytic cleavage to 5'-phosphomonoester.. Endonuclease that specifically degrades the RNA of RNA-DNA hybrids. In Streptococcus pneumoniae (strain CGSP14), this protein is Ribonuclease HIII.